The primary structure comprises 205 residues: Imidazole glycerol phosphate synthase subunit HisH (205 aa).

The region spanning 6-205 (RVGIIDHGSG…LLTRWLNQLS (200 aa)) is the Glutamine amidotransferase type-1 domain. Cys84 functions as the Nucleophile in the catalytic mechanism. Catalysis depends on residues His185 and Glu187.

Heterodimer of HisH and HisF.

Its subcellular location is the cytoplasm. The enzyme catalyses 5-[(5-phospho-1-deoxy-D-ribulos-1-ylimino)methylamino]-1-(5-phospho-beta-D-ribosyl)imidazole-4-carboxamide + L-glutamine = D-erythro-1-(imidazol-4-yl)glycerol 3-phosphate + 5-amino-1-(5-phospho-beta-D-ribosyl)imidazole-4-carboxamide + L-glutamate + H(+). The catalysed reaction is L-glutamine + H2O = L-glutamate + NH4(+). The protein operates within amino-acid biosynthesis; L-histidine biosynthesis; L-histidine from 5-phospho-alpha-D-ribose 1-diphosphate: step 5/9. Functionally, IGPS catalyzes the conversion of PRFAR and glutamine to IGP, AICAR and glutamate. The HisH subunit catalyzes the hydrolysis of glutamine to glutamate and ammonia as part of the synthesis of IGP and AICAR. The resulting ammonia molecule is channeled to the active site of HisF. This chain is Imidazole glycerol phosphate synthase subunit HisH, found in Cutibacterium acnes (strain DSM 16379 / KPA171202) (Propionibacterium acnes).